Consider the following 681-residue polypeptide: U3 small nucleolar ribonucleoprotein protein MPP10 (681 aa).

Residues S61, S120, and S139 each carry the phosphoserine modification. A compositionally biased stretch (acidic residues) spans 105 to 147; it reads SLLPESEEQEREEDGSEIEADDKEDLEDLEEEEVSDMGNDDPE. 2 disordered regions span residues 105–202 and 216–364; these read SLLP…IVDD and NIEK…EKRQ. A coiled-coil region spans residues 109-138; sequence ESEEQEREEDGSEIEADDKEDLEDLEEEEV. Over residues 148–162 the composition is skewed to basic and acidic residues; that stretch reads MGERAENSSKSDLRK. Phosphoserine is present on residues S163, S167, and S171. The segment covering 180-190 has biased composition (polar residues); the sequence is LEQQSKVQNKG. Composition is skewed to basic and acidic residues over residues 193-202 and 216-226; these read KPREKSIVDD and NIEKEEERKDD. Positions 205–239 form a coiled coil; sequence FKLSEMEAYLENIEKEEERKDDNDEEEEDIDFFED. Over residues 227–247 the composition is skewed to acidic residues; sequence NDEEEEDIDFFEDIDSDEDEG. Phosphoserine is present on S242. The span at 253–264 shows a compositional bias: basic residues; the sequence is KKLKSGKSSRNL. Residues S275 and S289 each carry the phosphoserine modification. The segment covering 280-290 has biased composition (basic and acidic residues); it reads TNVHDDELDSN. Coiled coils occupy residues 284–324 and 348–382; these read DDEL…NKQH and NVKK…LEKK. The span at 291-318 shows a compositional bias: acidic residues; sequence KEDDEIAEEEAEELSISETDEDDDLQEN. Residues 319–329 show a composition bias toward basic and acidic residues; that stretch reads EDNKQHKESLK. Residue K350 forms a Glycyl lysine isopeptide (Lys-Gly) (interchain with G-Cter in SUMO2) linkage. Residues 351–364 are compositionally biased toward basic and acidic residues; sequence KNSDEVKSSFEKRQ. Glycyl lysine isopeptide (Lys-Gly) (interchain with G-Cter in SUMO2) cross-links involve residues K382 and K394. Residues 469-490 adopt a coiled-coil conformation; it reads LAEIYEQEYIKLNQQKTAEEEN. A Glycyl lysine isopeptide (Lys-Gly) (interchain with G-Cter in SUMO2) cross-link involves residue K555. Basic and acidic residues predominate over residues 558–575; sequence NKAGDIKTAAEKTATDKK. Residues 558-606 are disordered; that stretch reads NKAGDIKTAAEKTATDKKRERRKKKYQKRMKIKEKEKRRKLLEKSSVDQ. Residues 574–604 are a coiled coil; the sequence is KKRERRKKKYQKRMKIKEKEKRRKLLEKSSV. Residues 576 to 598 are compositionally biased toward basic residues; that stretch reads RERRKKKYQKRMKIKEKEKRRKL. An N6-acetyllysine modification is found at K609. Glycyl lysine isopeptide (Lys-Gly) (interchain with G-Cter in SUMO2) cross-links involve residues K632 and K649. The stretch at 648–670 forms a coiled coil; that stretch reads SKLQDQVKMQINDAKKTEKKKKK. The tract at residues 660–681 is disordered; it reads DAKKTEKKKKKRQDISVHKLKL. A compositionally biased stretch (basic and acidic residues) spans 672 to 681; that stretch reads QDISVHKLKL.

It belongs to the MPP10 family. In terms of assembly, part of the small subunit (SSU) processome, composed of more than 70 proteins and the RNA chaperone small nucleolar RNA (snoRNA) U3. Component of a heterotrimeric complex containing IMP3, IMP4 and MPHOSPH10. Interacts with IMP3 and IMP4. Post-translationally, phosphorylated in M (mitotic) phase.

The protein resides in the nucleus. Its subcellular location is the nucleolus. The protein localises to the chromosome. Functionally, component of the 60-80S U3 small nucleolar ribonucleoprotein (U3 snoRNP). Required for the early cleavages during pre-18S ribosomal RNA processing. Part of the small subunit (SSU) processome, first precursor of the small eukaryotic ribosomal subunit. During the assembly of the SSU processome in the nucleolus, many ribosome biogenesis factors, an RNA chaperone and ribosomal proteins associate with the nascent pre-rRNA and work in concert to generate RNA folding, modifications, rearrangements and cleavage as well as targeted degradation of pre-ribosomal RNA by the RNA exosome. The protein is U3 small nucleolar ribonucleoprotein protein MPP10 of Homo sapiens (Human).